Reading from the N-terminus, the 95-residue chain is Small ribosomal subunit protein bS20c (95 aa).

This sequence belongs to the bacterial ribosomal protein bS20 family.

It is found in the plastid. Its subcellular location is the chloroplast. In terms of biological role, binds directly to 16S ribosomal RNA. This Pyropia yezoensis (Susabi-nori) protein is Small ribosomal subunit protein bS20c.